Here is a 527-residue protein sequence, read N- to C-terminus: Cytochrome P450 monooxygenase olcJ (527 aa).

A helical transmembrane segment spans residues 21–43; the sequence is GLLTRYNVFMAISITVTALYLIH. Cysteine 464 lines the heme pocket.

It belongs to the cytochrome P450 family. Heme serves as cofactor.

The protein resides in the membrane. It functions in the pathway secondary metabolite biosynthesis; terpenoid biosynthesis. Cytochrome P450 monooxygenase; part of the gene cluster that mediates the biosynthesis of 15-deoxyoxalicine B. The first step of the pathway is the synthesis of nicotinyl-CoA from nicotinic acid by the nicotinic acid-CoA ligase olcI. Nicotinyl-CoA is then a substrate of polyketide synthase olcA to produce 4-hydroxy-6-(3-pyridinyl)-2H-pyran-2-one (HPPO) which is further prenylated by the polyprenyl transferase olcH to yield geranylgeranyl-HPPO. Geranylgeranyl pyrophosphate is provided by the cluster-specific geranylgeranyl pyrophosphate synthase olcC. The FAD-dependent monooxygenase olcE catalyzes the epoxidation of geranylgeranyl-HPPO and the terpene cyclase olcD catalyzes the cyclization of the terpenoid component, resulting in the formation of the tricyclic terpene moiety seen in predecaturin E. The cytochrome P450 monooxygenase then catalyzes the allylic oxidation of predecaturin E, which is followed by spirocylization with concomitant loss of one molecule of water to form decaturin E. Decaturin E is the substrate of the cytochrome P450 monooxygenase olcJ which hydroxylates it at the C-29 position to form decaturin F. The short-chain dehydrogenase/reductase olcF may catalyze the oxidation of decaturin F to generate the 29-hydroxyl-27-one intermediate, and subsequent hemiacetal formation probably leads to the formation of decaturin C. The dioxygenase olcK may be a peroxisomal enzyme that catalyzes the hydroxylation of decaturin C into decaturin A once decaturin C is shuttled into the peroxisome by the MFS transporter olcL. Finally the cytochrome P450 monooxygenase olcB catalyzes the oxidative rearrangement to yield 15-deoxyoxalicine B. In the absence of olcJ, decaturin E may be shunted to a pathway in which it is oxidized to a ketone, possibly by olcF, to form decaturin D, which undergoes further allylic oxidation to yield decaturin G. Moreover, in the absence of oclK or oclL, oclB can convert decaturin C into 15-deoxyoxalicine A. The chain is Cytochrome P450 monooxygenase olcJ from Penicillium canescens.